A 302-amino-acid chain; its full sequence is MAANYWASTQRKHWLFTRERLAEIRESFKEKDKASHTHFPLPDQRLLNIYFNQQLIKLGKRMSTRQQALATAQVYIKRYYTKNEIRNTNPYLVLTTAFYLACKMEECPQHIRFVVSEARALWPEFIVPDVSKVGECEFSLISEMQAQLIVHHPYRTLSELQPELSLTSDEVALAWSVINDHYLTDLSLLYPPHIIAVMAIIVAVVFKPSSQTAFHGSAAPIAGAMRDGGMNILAALSDKGGAGPPPRIQKLIAWLAESEVDIKAVIESTQELVSLYEVWEQYSEKNCKELLGRMIRSKSLDK.

The region spanning 53–142 (QQLIKLGKRM…VGECEFSLIS (90 aa)) is the Cyclin N-terminal domain.

It belongs to the cyclin family. Cyclin C subfamily. Component of the srb8-11 complex, a regulatory module of the Mediator complex.

The protein resides in the nucleus. Its function is as follows. Component of the srb8-11 complex. The srb8-11 complex is a regulatory module of the Mediator complex which is itself involved in regulation of basal and activated RNA polymerase II-dependent transcription. The srb8-11 complex may be involved in the transcriptional repression of a subset of genes regulated by Mediator. It may inhibit the association of the Mediator complex with RNA polymerase II to form the holoenzyme complex. The srb8-11 complex phosphorylates the C-terminal domain (CTD) of the largest subunit of RNA polymerase II. In Emericella nidulans (strain FGSC A4 / ATCC 38163 / CBS 112.46 / NRRL 194 / M139) (Aspergillus nidulans), this protein is RNA polymerase II holoenzyme cyclin-like subunit (ssn8).